Here is a 329-residue protein sequence, read N- to C-terminus: 2-oxoglutarate-dependent dioxygenase htyE (329 aa).

Residues 175-289 (NTSELRLLHY…RYSVAYFGKP (115 aa)) form the Fe2OG dioxygenase domain. Fe cation-binding residues include H201, D203, and H261. R280 is a binding site for 2-oxoglutarate.

It belongs to the iron/ascorbate-dependent oxidoreductase family. The cofactor is Fe(2+).

Its pathway is antifungal biosynthesis. Functionally, 2-oxoglutarate-dependent dioxygenase; part of the gene cluster that mediates the de novo generation of L-homotyrosine from acetyl-CoA and 4-hydroxyphenyl-pyruvate. L-homotyrosine is a building block of echinocandin B, a fungal lipidated cyclic hexapeptide that acts as an antifungal agent. L-homotyrosine 4-hydroxyphenyl-pyruvate first undergoes an aldol-type condensation by htyA with the C-2 of acetyl-CoA followed by the release of CoA to form 2-(4-hydroxybenzyl)-malate. This is followed by isomerization of 2-(4-hydroxy-benzyl)-malate to 3-(4-hydroxybenzyl)-malate by htyD. Thereafter, 3-(4-hydroxybenzyl)-malate undergoes decarboxylation and oxidation to form 2-oxo-4-(4-hydroxybenzyl)butanoic acid, coupled to reduction of NAD(+) to NADH by htyC. The product then undergoes transamination catalyzed by htyB to form L-homotyrosine. The protein is 2-oxoglutarate-dependent dioxygenase htyE of Aspergillus rugulosus (Emericella rugulosa).